A 601-amino-acid polypeptide reads, in one-letter code: Bifunctional protein GlmU (601 aa).

The segment at 1 to 375 (MKSDLAIVIL…SELLLGVNNR (375 aa)) is pyrophosphorylase. UDP-N-acetyl-alpha-D-glucosamine contacts are provided by residues 10–13 (LAAG), Lys24, Gln75, and 81–82 (GT). Residue Asp165 coordinates Mg(2+). UDP-N-acetyl-alpha-D-glucosamine-binding residues include Gly201, Glu216, Asn230, and Asn373. Mg(2+) is bound at residue Asn373. The interval 376-396 (VQLAKTEKILNDQIIKRWQLY) is linker. The interval 397–601 (GVTIKSPETT…PKWAENRGDG (205 aa)) is N-acetyltransferase. Residues Arg478 and Lys496 each contribute to the UDP-N-acetyl-alpha-D-glucosamine site. His508 serves as the catalytic Proton acceptor. Positions 511 and 522 each coordinate UDP-N-acetyl-alpha-D-glucosamine. Residues Ala525, 531–532 (NY), and Ala568 each bind acetyl-CoA.

It in the N-terminal section; belongs to the N-acetylglucosamine-1-phosphate uridyltransferase family. In the C-terminal section; belongs to the transferase hexapeptide repeat family. As to quaternary structure, homotrimer. The cofactor is Mg(2+).

Its subcellular location is the cytoplasm. The catalysed reaction is alpha-D-glucosamine 1-phosphate + acetyl-CoA = N-acetyl-alpha-D-glucosamine 1-phosphate + CoA + H(+). It carries out the reaction N-acetyl-alpha-D-glucosamine 1-phosphate + UTP + H(+) = UDP-N-acetyl-alpha-D-glucosamine + diphosphate. It participates in nucleotide-sugar biosynthesis; UDP-N-acetyl-alpha-D-glucosamine biosynthesis; N-acetyl-alpha-D-glucosamine 1-phosphate from alpha-D-glucosamine 6-phosphate (route II): step 2/2. The protein operates within nucleotide-sugar biosynthesis; UDP-N-acetyl-alpha-D-glucosamine biosynthesis; UDP-N-acetyl-alpha-D-glucosamine from N-acetyl-alpha-D-glucosamine 1-phosphate: step 1/1. Its pathway is bacterial outer membrane biogenesis; LPS lipid A biosynthesis. Catalyzes the last two sequential reactions in the de novo biosynthetic pathway for UDP-N-acetylglucosamine (UDP-GlcNAc). The C-terminal domain catalyzes the transfer of acetyl group from acetyl coenzyme A to glucosamine-1-phosphate (GlcN-1-P) to produce N-acetylglucosamine-1-phosphate (GlcNAc-1-P), which is converted into UDP-GlcNAc by the transfer of uridine 5-monophosphate (from uridine 5-triphosphate), a reaction catalyzed by the N-terminal domain. This is Bifunctional protein GlmU from Tropheryma whipplei (strain TW08/27) (Whipple's bacillus).